Reading from the N-terminus, the 306-residue chain is uncharacterized protein (306 aa).

It belongs to the asfivirus CP312R family.

The protein resides in the virion. This is an uncharacterized protein from African swine fever virus (isolate Pig/Kenya/KEN-50/1950) (ASFV).